We begin with the raw amino-acid sequence, 115 residues long: Phosphoribosyl-AMP cyclohydrolase (115 aa).

Asp80 serves as a coordination point for Mg(2+). A Zn(2+)-binding site is contributed by Cys81. Positions 82 and 84 each coordinate Mg(2+). Zn(2+) contacts are provided by Cys97 and Cys104.

It belongs to the PRA-CH family. Homodimer. It depends on Mg(2+) as a cofactor. Requires Zn(2+) as cofactor.

It is found in the cytoplasm. It catalyses the reaction 1-(5-phospho-beta-D-ribosyl)-5'-AMP + H2O = 1-(5-phospho-beta-D-ribosyl)-5-[(5-phospho-beta-D-ribosylamino)methylideneamino]imidazole-4-carboxamide. It functions in the pathway amino-acid biosynthesis; L-histidine biosynthesis; L-histidine from 5-phospho-alpha-D-ribose 1-diphosphate: step 3/9. Functionally, catalyzes the hydrolysis of the adenine ring of phosphoribosyl-AMP. The sequence is that of Phosphoribosyl-AMP cyclohydrolase from Mycobacterium avium (strain 104).